Consider the following 185-residue polypeptide: Ribosome-recycling factor (185 aa).

The protein belongs to the RRF family.

The protein resides in the cytoplasm. In terms of biological role, responsible for the release of ribosomes from messenger RNA at the termination of protein biosynthesis. May increase the efficiency of translation by recycling ribosomes from one round of translation to another. This Listeria welshimeri serovar 6b (strain ATCC 35897 / DSM 20650 / CCUG 15529 / CIP 8149 / NCTC 11857 / SLCC 5334 / V8) protein is Ribosome-recycling factor.